The sequence spans 177 residues: Probable chemoreceptor glutamine deamidase CheD (177 aa).

It belongs to the CheD family.

The catalysed reaction is L-glutaminyl-[protein] + H2O = L-glutamyl-[protein] + NH4(+). Probably deamidates glutamine residues to glutamate on methyl-accepting chemotaxis receptors (MCPs), playing an important role in chemotaxis. The sequence is that of Probable chemoreceptor glutamine deamidase CheD from Pseudomonas savastanoi pv. phaseolicola (strain 1448A / Race 6) (Pseudomonas syringae pv. phaseolicola (strain 1448A / Race 6)).